A 239-amino-acid chain; its full sequence is MGKPEFYDFCVHAVPDGANAVEELSSLSRHLGYSGIALANHSDKLPSKKPVLPSIEGFEVFRGIELVEENPSKLHGLVGKFRSSMDVLIVHGGSEAVNRAALENPRVDILNHPAFDKSSGLNQVLAKAAAENGVAIGITLRPLLHSRGSRRIRMLSDLKANLELARKYDVPLVLCSDAMSCYDLRSPMETLAFAEVCGLEEDEALDALSTVPKKIIKKNRPGPGYVREGIEVLEGEDIF.

This sequence belongs to the eukaryotic/archaeal RNase P protein component 3 family. Consists of a catalytic RNA component and at least 4-5 protein subunits.

The protein localises to the cytoplasm. The catalysed reaction is Endonucleolytic cleavage of RNA, removing 5'-extranucleotides from tRNA precursor.. Part of ribonuclease P, a protein complex that generates mature tRNA molecules by cleaving their 5'-ends. In Methanosarcina mazei (strain ATCC BAA-159 / DSM 3647 / Goe1 / Go1 / JCM 11833 / OCM 88) (Methanosarcina frisia), this protein is Ribonuclease P protein component 3.